The primary structure comprises 430 residues: 3-phosphoshikimate 1-carboxyvinyltransferase (430 aa).

3-phosphoshikimate contacts are provided by Lys20, Ser21, and Arg25. Phosphoenolpyruvate is bound at residue Lys20. The phosphoenolpyruvate site is built by Gly90 and Arg118. Residues Ser163, Ser164, Gln165, Ser191, Asp311, and Lys338 each contribute to the 3-phosphoshikimate site. Gln165 provides a ligand contact to phosphoenolpyruvate. Asp311 acts as the Proton acceptor in catalysis. Positions 342 and 383 each coordinate phosphoenolpyruvate.

Belongs to the EPSP synthase family. Monomer.

It is found in the cytoplasm. The enzyme catalyses 3-phosphoshikimate + phosphoenolpyruvate = 5-O-(1-carboxyvinyl)-3-phosphoshikimate + phosphate. It functions in the pathway metabolic intermediate biosynthesis; chorismate biosynthesis. In terms of biological role, catalyzes the transfer of the enolpyruvyl moiety of phosphoenolpyruvate (PEP) to the 5-hydroxyl of shikimate-3-phosphate (S3P) to produce enolpyruvyl shikimate-3-phosphate and inorganic phosphate. The polypeptide is 3-phosphoshikimate 1-carboxyvinyltransferase (Methanosarcina acetivorans (strain ATCC 35395 / DSM 2834 / JCM 12185 / C2A)).